Reading from the N-terminus, the 444-residue chain is Pre-mRNA-splicing factor cwc25 (444 aa).

Disordered stretches follow at residues 1–27 (MGSG…QKAE), 168–385 (LASM…TDLD), and 397–425 (EAER…GFMS). Residues 19-65 (NVAATQKAEAEAIAERKKLQQRLQEIEEERRKEEIQKALEAAGGKRK) adopt a coiled-coil conformation. A compositionally biased stretch (basic residues) spans 186–199 (QRRHKHRSHHHRSD). Composition is skewed to basic and acidic residues over residues 200 to 220 (RHRD…DRDR) and 228 to 281 (DSRD…DDRS). A compositionally biased stretch (basic residues) spans 282–293 (RRHRFPQGRSRS). 3 stretches are compositionally biased toward basic and acidic residues: residues 305–344 (RREY…EQPK), 360–372 (DGDH…ERAK), and 397–410 (EAER…EKAR). The stretch at 364 to 417 (KNAEEERAKKLAAMQAAATDLDKAREERLKALAEAERAEREADEKARQQNKKFR) forms a coiled coil.

The protein belongs to the CWC25 family. Associated with the spliceosome.

The protein resides in the nucleus. Involved in pre-mRNA splicing. The protein is Pre-mRNA-splicing factor cwc25 (msp-6) of Neurospora crassa (strain ATCC 24698 / 74-OR23-1A / CBS 708.71 / DSM 1257 / FGSC 987).